The following is a 140-amino-acid chain: Large ribosomal subunit protein bL17 (140 aa).

The protein belongs to the bacterial ribosomal protein bL17 family. Part of the 50S ribosomal subunit. Contacts protein L32.

This is Large ribosomal subunit protein bL17 from Rhizorhabdus wittichii (strain DSM 6014 / CCUG 31198 / JCM 15750 / NBRC 105917 / EY 4224 / RW1) (Sphingomonas wittichii).